The sequence spans 292 residues: 4-hydroxybenzoate solanesyltransferase (292 aa).

Helical transmembrane passes span 28-48, 49-69, 97-117, 118-138, 140-160, 172-192, 217-237, 239-259, and 272-292; these read LILMIPALWAVCLAAQGLPPL, PLLGTIALGTLATSGLGCVVN, VGIGVALVALLCAAGLAFYLT, PLSFWLCVAAVPVIVAYPGAK, VFPVPQLVLSIAWGFAVLISW, WVLWGATVFWTLGFDTVYAMA, VGIFFALTIGCLFYLGMILML, PLYWLSLAIAIVGWVIQYIQL, and IFGQNVIIGFVLLAGMLLGWL.

The protein belongs to the UbiA prenyltransferase family. The cofactor is Mg(2+).

Its subcellular location is the cell inner membrane. It catalyses the reaction all-trans-nonaprenyl diphosphate + 4-hydroxybenzoate = 4-hydroxy-3-(all-trans-nonaprenyl)benzoate + diphosphate. Catalyzes the prenylation of para-hydroxybenzoate (PHB) with an all-trans polyprenyl group. Mediates the second step in the final reaction sequence of plastoquinone-9 (PQ-9) biosynthesis, which is the condensation of the polyisoprenoid side chain with PHB, generating the first membrane-bound Q intermediate 4-hydroxy-3-solanesylbenzoate. The protein is 4-hydroxybenzoate solanesyltransferase of Synechocystis sp. (strain ATCC 27184 / PCC 6803 / Kazusa).